The sequence spans 285 residues: Ribosomal RNA small subunit methyltransferase A (285 aa).

S-adenosyl-L-methionine-binding residues include Asn11, Leu13, Gly37, Glu57, Asp85, and Asn105.

Belongs to the class I-like SAM-binding methyltransferase superfamily. rRNA adenine N(6)-methyltransferase family. RsmA subfamily.

The protein localises to the cytoplasm. It carries out the reaction adenosine(1518)/adenosine(1519) in 16S rRNA + 4 S-adenosyl-L-methionine = N(6)-dimethyladenosine(1518)/N(6)-dimethyladenosine(1519) in 16S rRNA + 4 S-adenosyl-L-homocysteine + 4 H(+). In terms of biological role, specifically dimethylates two adjacent adenosines (A1518 and A1519) in the loop of a conserved hairpin near the 3'-end of 16S rRNA in the 30S particle. May play a critical role in biogenesis of 30S subunits. The chain is Ribosomal RNA small subunit methyltransferase A from Campylobacter curvus (strain 525.92).